A 357-amino-acid chain; its full sequence is D-alanine--D-alanine ligase A (357 aa).

The 206-residue stretch at 143–348 (KRLLREAGLA…YSKVIDVLIE (206 aa)) folds into the ATP-grasp domain. 171 to 226 (AGALGLPFFAKPARQGSSFGVSKVHDRDGFEQAVETALRYDSKALIEEFVDGREIE) is an ATP binding site. Mg(2+) is bound by residues Asp302, Glu315, and Asn317.

Belongs to the D-alanine--D-alanine ligase family. Mg(2+) is required as a cofactor. It depends on Mn(2+) as a cofactor.

Its subcellular location is the cytoplasm. The catalysed reaction is 2 D-alanine + ATP = D-alanyl-D-alanine + ADP + phosphate + H(+). It functions in the pathway cell wall biogenesis; peptidoglycan biosynthesis. Its function is as follows. Cell wall formation. In Mesorhizobium japonicum (strain LMG 29417 / CECT 9101 / MAFF 303099) (Mesorhizobium loti (strain MAFF 303099)), this protein is D-alanine--D-alanine ligase A.